The following is a 495-amino-acid chain: Cysteine-rich secretory protein LCCL domain-containing 2 (495 aa).

An N-terminal signal peptide occupies residues 1 to 22 (MSCLLNNMVLMGLALLVCGVQA). The N-linked (GlcNAc...) asparagine glycan is linked to Asn-27. Residues 60–200 (LMLHNKLRGQ…ENAVYLVCNY (141 aa)) enclose the SCP domain. LCCL domains follow at residues 282–377 (MTQV…SSSF) and 383–486 (TETA…QNGN). Cystine bridges form between Cys-288–Cys-306, Cys-310–Cys-330, Cys-389–Cys-411, and Cys-415–Cys-438.

Binds to heparin, dermatan sulfate and chondroitin sulfate. As to expression, present in kidney renal tubules (at protein level).

The protein localises to the secreted. Promotes matrix assembly. This Mus musculus (Mouse) protein is Cysteine-rich secretory protein LCCL domain-containing 2 (Crispld2).